A 659-amino-acid chain; its full sequence is Zinc finger protein 304 (659 aa).

Positions 14–88 (VTFEDVFVYF…TAESGLFQKA (75 aa)) constitute a KRAB domain. 16 C2H2-type zinc fingers span residues 89–111 (HPCE…QGSH), 115–139 (KLCT…QKQH), 251–273 (FRCL…RKIH), 279–301 (HVCK…QKFH), 307–329 (YTCS…QRVH), 335–357 (YDCS…QRIH), 363–385 (YKCN…QRFH), 391–413 (YECS…WRIH), 419–441 (YECI…RRVH), 447–469 (YVCS…QIIH), 475–497 (YECS…QKIH), 503–525 (YECG…QRIH), 531–553 (YECN…QRVH), 559–581 (YVCS…KKVH), 587–609 (YECS…QRVH), and 615–637 (YVCS…QKAH).

This sequence belongs to the krueppel C2H2-type zinc-finger protein family. As to quaternary structure, probably part of a corepressor complex containing ZNF304, TRIM28, SETDB1 and DNMT1; leading to promoter hypermethylation and transcriptional silencing. Probably associates with Polycomb group (PcG) complexes; leading to trimethylation of 'Lys-27' of histone H3 (H3K27me3). Interacts with USP28. Deubiquitinated by USP28; the deubiquitination leads to the stabilization of ZNF304 from proteolytic degradation. In terms of tissue distribution, expressed in undifferentiated embryonic stem cells (ESCs). Expressed strongly in colorectal cancers cells (CRCs). Expressed strongly in ovarian carcinoma (OC) tumor cell lines compared to non-transformed ovarian epithelial cells (at protein level). Expressed in lymphoid tissues, thyroid, adrenal gland, prostate, pancreas and skeletal muscles.

The protein resides in the nucleus. Acts as a transcriptional regulator and plays a role in gene silencing. Probably forms a corepressor complex required for activated KRAS-mediated promoter hypermethylation and transcriptional silencing of several tumor suppressor genes (TSGs) or other tumor-related genes in colorectal cancer (CRC) cells. Also required to maintain a transcriptionally repressive state of genes in undifferentiated embryonic stem cells (ESCs) by inducing trimethylation of 'Lys-27' of histone H3 (H3K27me3) in a Polycomb group (PcG) complexes-dependent manner. Associates at promoter regions of TSGs and mediates the recruitment of the corepressor complex containing the scaffolding protein TRIM28, methyltransferase DNMT1 and histone methyltransferase SETDB1 and/or the PcG complexes at those sites. Transcription factor involved in the metastatic cascade process by inducing cell migration and proliferation and gain resistance to anoikis of ovarian carcinoma (OC) cells via integrin-mediated signaling pathways. Associates with the ITGB1 promoter and positively regulates beta-1 integrin transcription expression. Promotes angiogenesis. Promotes tumor growth. The protein is Zinc finger protein 304 of Homo sapiens (Human).